The sequence spans 578 residues: MAEESRKPSAPSPPDQTPEEDLVIVKVEEDHGWDQESSLHENNPLGQEVFRLRFRQLCYQETLGPREALIQLRALCHQWLRPDLNTKEQILELLVLEQFLTILPEELQTLVKEHQLENGEEVVTLLEDLERQIDILGRPVSARVHGHRVLWEEVVHSASAPEPPNTQLQSEATQHKSPVPQESQERSMSTSQSPTRSQKGSSGDQEMTATLLTAGFQTLEKIEDMAVSLIREEWLLDPSQKDLSRDNRPEDFRNVFSLGGETRSENRELASKQVISTGIHPHGETAAKCNGDVIRGLEHEEARDLLGRLERQRGNPTQERRHKCDECGKSFAQSSGLVRHWRIHTGEKPYQCNVCGKAFSYRSALLSHQDIHNKVKRYHCKECGKAFSQNTGLILHQRIHTGEKPYQCNQCGKAFSQSAGLILHQRIHSGERPYECNECGKAFSHSSHLIGHQRIHTGEKPYECDECGKTFRRSSHLIGHQRSHTGEKPYKCNECGRAFSQKSGLIEHQRIHTGERPYKCKECGKAFNGNTGLIQHLRIHTGEKPYQCNECGKAFIQRSSLIRHQRIHSGEKSESISV.

The tract at residues 1–20 (MAEESRKPSAPSPPDQTPEE) is disordered. Residue Ser12 is modified to Phosphoserine. Residue Lys26 forms a Glycyl lysine isopeptide (Lys-Gly) (interchain with G-Cter in SUMO2) linkage. One can recognise an SCAN box domain in the interval 51–133 (RLRFRQLCYQ…TLLEDLERQI (83 aa)). The interval 158-205 (ASAPEPPNTQLQSEATQHKSPVPQESQERSMSTSQSPTRSQKGSSGDQ) is disordered. Residues 165–205 (NTQLQSEATQHKSPVPQESQERSMSTSQSPTRSQKGSSGDQ) show a composition bias toward polar residues. Residues Lys176 and Lys199 each participate in a glycyl lysine isopeptide (Lys-Gly) (interchain with G-Cter in SUMO2) cross-link. At Ser201 the chain carries Phosphoserine. A KRAB domain is found at 220-316 (EKIEDMAVSL…GRLERQRGNP (97 aa)). Glycyl lysine isopeptide (Lys-Gly) (interchain with G-Cter in SUMO2) cross-links involve residues Lys221, Lys272, and Lys288. C2H2-type zinc fingers lie at residues 322–344 (HKCD…WRIH) and 350–372 (YQCN…QDIH). Residues Lys374 and Lys376 each participate in a glycyl lysine isopeptide (Lys-Gly) (interchain with G-Cter in SUMO2) cross-link. 7 consecutive C2H2-type zinc fingers follow at residues 378–400 (YHCK…QRIH), 406–428 (YQCN…QRIH), 434–456 (YECN…QRIH), 462–484 (YECD…QRSH), 490–512 (YKCN…QRIH), 518–540 (YKCK…LRIH), and 546–568 (YQCN…QRIH). Residues Lys413 and Lys441 each participate in a glycyl lysine isopeptide (Lys-Gly) (interchain with G-Cter in SUMO2) cross-link. A Glycyl lysine isopeptide (Lys-Gly) (interchain with G-Cter in SUMO2) cross-link involves residue Lys502. Lys572 participates in a covalent cross-link: Glycyl lysine isopeptide (Lys-Gly) (interchain with G-Cter in SUMO2).

The protein belongs to the krueppel C2H2-type zinc-finger protein family.

It is found in the nucleus. Functionally, may be involved in transcriptional regulation. This Pan paniscus (Pygmy chimpanzee) protein is Zinc finger protein with KRAB and SCAN domains 8 (ZKSCAN8).